The sequence spans 313 residues: Intelectin-like protein (313 aa).

In terms of domain architecture, Fibrinogen C-terminal spans 33–251; it reads TSCCSQTSPG…NNEKAPMALC (219 aa). Histidine 86, glutamate 87, asparagine 89, glycine 92, glycine 97, aspartate 98, and aspartate 133 together coordinate Ca(2+). Disulfide bonds link cysteine 94-cysteine 280, cysteine 199-cysteine 259, and cysteine 251-cysteine 265. The Ca(2+) site is built by asparagine 260, glutamate 262, glutamate 274, and aspartate 282. Residues 262 to 263 and glutamate 274 contribute to the a carbohydrate site; that span reads EH.

In terms of assembly, monomer, homodimer, homotrimer and homotetramer. Mostly monomeric or dimeric.

It localises to the secreted. Its function is as follows. Binds mannan, mannose and, to a lesser degree, D-lactose, N-acetylgalactosamine, N-acetylglucosamine and beta-D-glucose. This chain is Intelectin-like protein, found in Alligator mississippiensis (American alligator).